A 388-amino-acid polypeptide reads, in one-letter code: MALLRPHLHRFHSNTLRHSAYPSADAGGGLVVYPTYGRHRCSAIAIDAPSSLTGVTPIRWGYTSVQGFRDEMEDDIVIRSDAVDSFSYAAVFDGHAGSSSVKFLREELYKECVGALQAGSLLNGGDFAAIKEALIKAFESVDRNLLKWLEANGDEEDESGSTATVMIIRNDVSFIAHIGDSCAVLSRSGQIEELTDYHRPYGSSRAAIQEVKRVKEAGGWIVNGRICGDIAVSRAFGDIRFKTKKNDMLKKGVDEGRWSEKFVSRIEFKGDMVVATPDIFQVPLTSDVEFIILASDGLWDYMKSSDVVSYVRDQLRKHGNVQLACESLAQVALDRRSQDNISIIIADLGRTEWKNLPAQRQNVVVELVQAATTIGLVTVGIWMSSHLS.

Residues 59–348 (RWGYTSVQGF…DNISIIIADL (290 aa)) form the PPM-type phosphatase domain. Mn(2+) is bound by residues D93, G94, D296, and D339. The chain crosses the membrane as a helical span at residues 363–383 (VVVELVQAATTIGLVTVGIWM).

This sequence belongs to the PP2C family. The cofactor is Mg(2+). Mn(2+) is required as a cofactor.

The protein localises to the membrane. The protein resides in the plastid. It localises to the chloroplast stroma. The catalysed reaction is O-phospho-L-seryl-[protein] + H2O = L-seryl-[protein] + phosphate. It carries out the reaction O-phospho-L-threonyl-[protein] + H2O = L-threonyl-[protein] + phosphate. In terms of biological role, protein phosphatase specifically required for efficient dephosphorylation of the light-harvesting complex II outer antennae (LCHII) and transition from state 2 to state 1. State transition plays a central role in response to environmental changes and allows to adjust to changing light conditions via the redistribution of light excitation energy between photosystem II (PSII) and photosystem I (PSI) in a short time by relocating LHCII proteins. Mainly responsible for the dephosphorylation of Lhcb1 and Lhcb2 but not of the photosystem II core proteins. The polypeptide is Protein phosphatase 2C 57 (Arabidopsis thaliana (Mouse-ear cress)).